Here is a 238-residue protein sequence, read N- to C-terminus: ATP synthase subunit a, chloroplastic (238 aa).

5 helical membrane passes run 27 to 47 (GQVL…SFLG), 86 to 106 (VPFL…GALL), 125 to 145 (INTT…AGIS), 190 to 210 (LVVG…IMLL), and 211 to 231 (GVFT…AYIN).

Belongs to the ATPase A chain family. F-type ATPases have 2 components, F(1) - the catalytic core - and F(0) - the membrane proton channel. F(1) has five subunits: alpha(3), beta(3), gamma(1), delta(1), epsilon(1). F(0) has four main subunits: a(1), b(1), b'(1) and c(10-14). The alpha and beta chains form an alternating ring which encloses part of the gamma chain. F(1) is attached to F(0) by a central stalk formed by the gamma and epsilon chains, while a peripheral stalk is formed by the delta, b and b' chains.

The protein localises to the plastid. It localises to the chloroplast thylakoid membrane. F(1)F(0) ATP synthase produces ATP from ADP in the presence of a proton or sodium gradient. F-type ATPases consist of two structural domains, F(1) containing the extramembraneous catalytic core and F(0) containing the membrane proton channel, linked together by a central stalk and a peripheral stalk. During catalysis, ATP synthesis in the catalytic domain of F(1) is coupled via a rotary mechanism of the central stalk subunits to proton translocation. This chain is ATP synthase subunit a, chloroplastic, found in Chlamydomonas reinhardtii (Chlamydomonas smithii).